A 304-amino-acid polypeptide reads, in one-letter code: MLLSAVISFIGFAAFLQEANGHVVERADSRKPIWDIAHMVNDLDLVDEYLGDGANALEADLAFTSDGTADEMYHGVPCDCFRSCTRSEKFSTYMDYIRRITTPGSSNFRPQMLLLIIDLKLKGIEPNVAYAAGKSTAKKLLSSYWQDGKSGARAYIVLSLETITRQDFISGFKDAIDASGHTELYEKIGWDFSGNEDLGEIRRIYQKYGIDDHIWQGDGITNCWVRDDDRLKEAIKKKNDPNYKYTKKVYTWSIDKNASIRNALRLGVDAIMTNYPEDVKDILQESEFSGYLRMATYDDNPWVK.

The signal sequence occupies residues 1–21 (MLLSAVISFIGFAAFLQEANG). The propeptide occupies 22 to 26 (HVVER). H38 is a catalytic residue. Mg(2+) contacts are provided by E58 and D60. Catalysis depends on H74, which acts as the Nucleophile. Cystine bridges form between C78-C84 and C80-C223. D118 is a binding site for Mg(2+).

Belongs to the arthropod phospholipase D family. Class II subfamily. Class IIb sub-subfamily. Mg(2+) is required as a cofactor. In terms of tissue distribution, expressed by the venom gland.

The protein resides in the secreted. It catalyses the reaction an N-(acyl)-sphingosylphosphocholine = an N-(acyl)-sphingosyl-1,3-cyclic phosphate + choline. The catalysed reaction is an N-(acyl)-sphingosylphosphoethanolamine = an N-(acyl)-sphingosyl-1,3-cyclic phosphate + ethanolamine. The enzyme catalyses a 1-acyl-sn-glycero-3-phosphocholine = a 1-acyl-sn-glycero-2,3-cyclic phosphate + choline. It carries out the reaction a 1-acyl-sn-glycero-3-phosphoethanolamine = a 1-acyl-sn-glycero-2,3-cyclic phosphate + ethanolamine. Dermonecrotic toxins cleave the phosphodiester linkage between the phosphate and headgroup of certain phospholipids (sphingolipid and lysolipid substrates), forming an alcohol (often choline) and a cyclic phosphate. This toxin acts on sphingomyelin (SM) with low activity. It may also act on ceramide phosphoethanolamine (CPE), lysophosphatidylcholine (LPC) and lysophosphatidylethanolamine (LPE), but not on lysophosphatidylserine (LPS), and lysophosphatidylglycerol (LPG). It acts by transphosphatidylation, releasing exclusively cyclic phosphate products as second products. Induces hemolysis, dermonecrosis, and edema. Also induces platelet aggregation. This Loxosceles laeta (South American recluse spider) protein is Dermonecrotic toxin LlSicTox-betaIA1.